Reading from the N-terminus, the 134-residue chain is Small ribosomal subunit protein bS6 (134 aa).

Positions 99–134 are disordered; sequence EPSAMMQKRDRDERKDRERGRRRDEDGFSGDRNEEN. Residues 105 to 134 show a composition bias toward basic and acidic residues; it reads QKRDRDERKDRERGRRRDEDGFSGDRNEEN.

The protein belongs to the bacterial ribosomal protein bS6 family.

Its function is as follows. Binds together with bS18 to 16S ribosomal RNA. The protein is Small ribosomal subunit protein bS6 of Methylobacterium nodulans (strain LMG 21967 / CNCM I-2342 / ORS 2060).